The chain runs to 256 residues: DNA repair protein RecO (256 aa).

This sequence belongs to the RecO family.

In terms of biological role, involved in DNA repair and RecF pathway recombination. The polypeptide is DNA repair protein RecO (Bacillus pumilus (strain SAFR-032)).